The chain runs to 188 residues: Elongation factor P (188 aa).

K34 carries the N6-(3,6-diaminohexanoyl)-5-hydroxylysine modification.

This sequence belongs to the elongation factor P family. Post-translationally, may be beta-lysylated on the epsilon-amino group of Lys-34 by the combined action of EpmA and EpmB, and then hydroxylated on the C5 position of the same residue by EpmC (if this protein is present). Lysylation is critical for the stimulatory effect of EF-P on peptide-bond formation. The lysylation moiety may extend toward the peptidyltransferase center and stabilize the terminal 3-CCA end of the tRNA. Hydroxylation of the C5 position on Lys-34 may allow additional potential stabilizing hydrogen-bond interactions with the P-tRNA.

It is found in the cytoplasm. The protein operates within protein biosynthesis; polypeptide chain elongation. Its function is as follows. Involved in peptide bond synthesis. Alleviates ribosome stalling that occurs when 3 or more consecutive Pro residues or the sequence PPG is present in a protein, possibly by augmenting the peptidyl transferase activity of the ribosome. Modification of Lys-34 is required for alleviation. The chain is Elongation factor P from Pasteurella multocida (strain Pm70).